The primary structure comprises 178 residues: ATP synthase subunit delta (178 aa).

This sequence belongs to the ATPase delta chain family. As to quaternary structure, F-type ATPases have 2 components, F(1) - the catalytic core - and F(0) - the membrane proton channel. F(1) has five subunits: alpha(3), beta(3), gamma(1), delta(1), epsilon(1). F(0) has three main subunits: a(1), b(2) and c(10-14). The alpha and beta chains form an alternating ring which encloses part of the gamma chain. F(1) is attached to F(0) by a central stalk formed by the gamma and epsilon chains, while a peripheral stalk is formed by the delta and b chains.

It is found in the cell inner membrane. Its function is as follows. F(1)F(0) ATP synthase produces ATP from ADP in the presence of a proton or sodium gradient. F-type ATPases consist of two structural domains, F(1) containing the extramembraneous catalytic core and F(0) containing the membrane proton channel, linked together by a central stalk and a peripheral stalk. During catalysis, ATP synthesis in the catalytic domain of F(1) is coupled via a rotary mechanism of the central stalk subunits to proton translocation. In terms of biological role, this protein is part of the stalk that links CF(0) to CF(1). It either transmits conformational changes from CF(0) to CF(1) or is implicated in proton conduction. This chain is ATP synthase subunit delta, found in Teredinibacter turnerae (strain ATCC 39867 / T7901).